Here is a 1783-residue protein sequence, read N- to C-terminus: uncharacterized protein (1783 aa).

The helical transmembrane segment at 16–36 (FFLLFGIIFVLFSIIFLETSI) threads the bilayer. Over residues 105–119 (GSDSGQSNGSGDNQN) the composition is skewed to low complexity. Positions 105-125 (GSDSGQSNGSGDNQNKTIPRK) are disordered. 8 helical membrane-spanning segments follow: residues 917–937 (VSTV…ILLI), 967–987 (VFAG…AFLL), 1010–1030 (WLSF…ISWI), 1084–1104 (LFTY…AGTI), 1660–1680 (FLLG…GISM), 1709–1729 (FIPA…GVLI), 1730–1750 (GIQA…FEFL), and 1752–1772 (YMVG…YFWI).

This sequence belongs to the ABC-4 integral membrane protein family.

The protein resides in the cell membrane. This is an uncharacterized protein from Mycoplasma genitalium (strain ATCC 33530 / DSM 19775 / NCTC 10195 / G37) (Mycoplasmoides genitalium).